We begin with the raw amino-acid sequence, 398 residues long: Riboflavin transporter RfnT (398 aa).

12 helical membrane-spanning segments follow: residues 13-35 (ILTIAQALGASSPPIVISLGGLV), 45-67 (LVTLPVSLFNLGLALGTLPAAFF), 74-91 (RNAYMLGALVGAAAGVIA), 95-117 (IFAASFLIFCLGTLTAGFYASYV), 137-156 (ISWVMVGGLVAAIVGPQLVI), 166-188 (MFAGSFLSQAVLGLLALPVLFML), 220-242 (VAAGVCSYALMTFVMTAAPIAMV), 252-274 (ALGIQWHVLAMFAPSFFTGKLIT), 281-300 (ITALGLVLIAFSAIIALGGF), 305-324 (FWGALIFLGIGWNFGFIGAT), 345-367 (FIMFGTVACASFFAGSLLHSSGW), and 372-389 (WLVFPIVALVLVPLILRL).

It belongs to the major facilitator superfamily.

It localises to the cell membrane. Functionally, transports riboflavin into the cell. This chain is Riboflavin transporter RfnT, found in Brucella anthropi (strain ATCC 49188 / DSM 6882 / CCUG 24695 / JCM 21032 / LMG 3331 / NBRC 15819 / NCTC 12168 / Alc 37) (Ochrobactrum anthropi).